The primary structure comprises 163 residues: Secreted RxLR effector protein 135 (163 aa).

Residues 1–20 (MRRLYLFVLILATFLTTSHG) form the signal peptide. A RxLR-dEER motif is present at residues 33-45 (RGLQEEAGEDEER). Residues 94 to 127 (KNAGKPKRQTPQIAATGPAKPKVQSPEEAAAVPG) are disordered.

Belongs to the RxLR effector family.

The protein resides in the secreted. The protein localises to the host nucleus. It localises to the host cytoplasm. Its function is as follows. Secreted effector that completely suppresses the host cell death induced by cell death-inducing proteins. The polypeptide is Secreted RxLR effector protein 135 (Plasmopara viticola (Downy mildew of grapevine)).